Reading from the N-terminus, the 215-residue chain is 3-dehydroquinate dehydratase (215 aa).

3-dehydroquinate is bound by residues 30-32 and Arg-62; that span reads EVR. The active-site Proton donor/acceptor is His-114. The Schiff-base intermediate with substrate role is filled by Lys-140. Residues Arg-178 and Gln-201 each coordinate 3-dehydroquinate.

This sequence belongs to the type-I 3-dehydroquinase family. In terms of assembly, homodimer.

The enzyme catalyses 3-dehydroquinate = 3-dehydroshikimate + H2O. The protein operates within metabolic intermediate biosynthesis; chorismate biosynthesis; chorismate from D-erythrose 4-phosphate and phosphoenolpyruvate: step 3/7. Functionally, involved in the third step of the chorismate pathway, which leads to the biosynthesis of aromatic amino acids. Catalyzes the cis-dehydration of 3-dehydroquinate (DHQ) and introduces the first double bond of the aromatic ring to yield 3-dehydroshikimate. The polypeptide is 3-dehydroquinate dehydratase (Methanopyrus kandleri (strain AV19 / DSM 6324 / JCM 9639 / NBRC 100938)).